The following is a 295-amino-acid chain: MLIIDGKKVSLELKDELKASVDRYRETTGKVPGLTVIIVGEDPASQVYVRNKAKTCKEIGMNSSVITMPADTPEEHLLDTIASLNLDPAVHGILVQQPLPEQIDEFAVTLAIDPQKDVDGFHPENLGRLVMGHLDKCFVSCTPYGILELLGRYGIETSGKHCVVVGRSNIVGKPMANLMLQKLKRSNCTVTICHSATQDIASYTRQADILIAAIGRAKFITPDMVKEGAVVIDVGINRIDDPTTKSGTRLVGDVDYEGVSALASAMTPVPGGVGPMTIAMLLKNTLHSFERTHNL.

NADP(+) is bound by residues 166 to 168 (GRS), S195, and I236.

It belongs to the tetrahydrofolate dehydrogenase/cyclohydrolase family. As to quaternary structure, homodimer.

The enzyme catalyses (6R)-5,10-methylene-5,6,7,8-tetrahydrofolate + NADP(+) = (6R)-5,10-methenyltetrahydrofolate + NADPH. It catalyses the reaction (6R)-5,10-methenyltetrahydrofolate + H2O = (6R)-10-formyltetrahydrofolate + H(+). The protein operates within one-carbon metabolism; tetrahydrofolate interconversion. Functionally, catalyzes the oxidation of 5,10-methylenetetrahydrofolate to 5,10-methenyltetrahydrofolate and then the hydrolysis of 5,10-methenyltetrahydrofolate to 10-formyltetrahydrofolate. This chain is Bifunctional protein FolD, found in Chlorobium phaeovibrioides (strain DSM 265 / 1930) (Prosthecochloris vibrioformis (strain DSM 265)).